Consider the following 457-residue polypeptide: uncharacterized protein (457 aa).

Transmembrane regions (helical) follow at residues 1 to 21 (MVSS…MTLL) and 250 to 270 (ILIV…ATTF).

The protein localises to the membrane. This is an uncharacterized protein from Saccharomyces cerevisiae (strain ATCC 204508 / S288c) (Baker's yeast).